Consider the following 237-residue polypeptide: Demethylmenaquinone methyltransferase (237 aa).

Residues Thr-58, Asp-79, and 106 to 107 (NA) each bind S-adenosyl-L-methionine.

The protein belongs to the class I-like SAM-binding methyltransferase superfamily. MenG/UbiE family.

It carries out the reaction a 2-demethylmenaquinol + S-adenosyl-L-methionine = a menaquinol + S-adenosyl-L-homocysteine + H(+). Its pathway is quinol/quinone metabolism; menaquinone biosynthesis; menaquinol from 1,4-dihydroxy-2-naphthoate: step 2/2. Functionally, methyltransferase required for the conversion of demethylmenaquinol (DMKH2) to menaquinol (MKH2). This Bacillus mycoides (strain KBAB4) (Bacillus weihenstephanensis) protein is Demethylmenaquinone methyltransferase.